A 119-amino-acid chain; its full sequence is UPF0292 protein TV1259 (119 aa).

A Toprim domain is found at 11-93 (SIPIIVEGRN…YVDLYLWNFI (83 aa)). Residues Glu-17, Asp-62, and Asp-64 each coordinate Mg(2+).

This sequence belongs to the UPF0292 family. Mg(2+) is required as a cofactor.

In Thermoplasma volcanium (strain ATCC 51530 / DSM 4299 / JCM 9571 / NBRC 15438 / GSS1), this protein is UPF0292 protein TV1259.